We begin with the raw amino-acid sequence, 449 residues long: Allantoinase (449 aa).

Zn(2+) contacts are provided by histidine 59, histidine 61, lysine 146, histidine 182, histidine 238, and aspartate 311. Position 146 is an N6-carboxylysine (lysine 146).

The protein belongs to the metallo-dependent hydrolases superfamily. Allantoinase family. In terms of assembly, homotetramer. Requires Zn(2+) as cofactor. Carboxylation allows a single lysine to coordinate two zinc ions.

The catalysed reaction is (S)-allantoin + H2O = allantoate + H(+). Its pathway is nitrogen metabolism; (S)-allantoin degradation; allantoate from (S)-allantoin: step 1/1. Functionally, catalyzes the conversion of allantoin (5-ureidohydantoin) to allantoic acid by hydrolytic cleavage of the five-member hydantoin ring. This Deinococcus geothermalis (strain DSM 11300 / CIP 105573 / AG-3a) protein is Allantoinase.